A 72-amino-acid polypeptide reads, in one-letter code: MEGRRVKKHLITVVVAFATAVGAMALADPYEASADPITFDQRAFPCEEDEVLGFAPEFGPDRVGCIHVDQIR.

This is Gene 79 protein (79) from Mycobacterium (Mycobacteriophage L5).